A 157-amino-acid polypeptide reads, in one-letter code: 2-C-methyl-D-erythritol 2,4-cyclodiphosphate synthase (157 aa).

Residues D8 and H10 each contribute to the a divalent metal cation site. Residues 8–10 and 34–35 each bind 4-CDP-2-C-methyl-D-erythritol 2-phosphate; these read DVH and HS. H42 contacts a divalent metal cation. Residues 56-58, 61-65, 100-106, 132-135, F139, and R142 contribute to the 4-CDP-2-C-methyl-D-erythritol 2-phosphate site; these read DIG, FPDTD, AQAPKML, and TTTE.

It belongs to the IspF family. In terms of assembly, homotrimer. It depends on a divalent metal cation as a cofactor.

It carries out the reaction 4-CDP-2-C-methyl-D-erythritol 2-phosphate = 2-C-methyl-D-erythritol 2,4-cyclic diphosphate + CMP. The protein operates within isoprenoid biosynthesis; isopentenyl diphosphate biosynthesis via DXP pathway; isopentenyl diphosphate from 1-deoxy-D-xylulose 5-phosphate: step 4/6. In terms of biological role, involved in the biosynthesis of isopentenyl diphosphate (IPP) and dimethylallyl diphosphate (DMAPP), two major building blocks of isoprenoid compounds. Catalyzes the conversion of 4-diphosphocytidyl-2-C-methyl-D-erythritol 2-phosphate (CDP-ME2P) to 2-C-methyl-D-erythritol 2,4-cyclodiphosphate (ME-CPP) with a corresponding release of cytidine 5-monophosphate (CMP). This is 2-C-methyl-D-erythritol 2,4-cyclodiphosphate synthase from Photorhabdus laumondii subsp. laumondii (strain DSM 15139 / CIP 105565 / TT01) (Photorhabdus luminescens subsp. laumondii).